The following is a 309-amino-acid chain: Vomeronasal type-1 receptor 52 (309 aa).

At 1–19 (MNKDHTLYCSVYIRNAFFS) the chain is on the extracellular side. The helical transmembrane segment at 20–40 (EIGIGISANSCLLLFHTFMFI) threads the bilayer. At 41-49 (RGHRPRLTD) the chain is on the cytoplasmic side. Residues 50 to 70 (LPIGFVALIHLVMLLLAAYIT) form a helical membrane-spanning segment. Residues 71-93 (EDFFMSSGGWDDITCKLVIFLHR) lie on the Extracellular side of the membrane. Cys-85 and Cys-172 are joined by a disulfide. Residues 94–114 (FFRSLSVCATCLLSVFQAIIL) traverse the membrane as a helical segment. Topologically, residues 115–134 (CPQSSHLAKLKQNSPHQLSY) are cytoplasmic. The helical transmembrane segment at 135–155 (FFIFLSIFYTSISSHILIAAI) threads the bilayer. Topologically, residues 156–187 (PTQNITFVNLIYITNSCSFLPLSSSMQHTFST) are extracellular. N-linked (GlcNAc...) asparagine glycosylation occurs at Asn-159. Residues 188–208 (LLAFRNVFVIGLMGLSTCYMA) traverse the membrane as a helical segment. At 209–238 (TLLCRHKTRSQRLQNSKLSPKATPEQRALR) the chain is on the cytoplasmic side. Residues 239–259 (TILMLMSFFLLMSTFDSIISY) form a helical membrane-spanning segment. Over 260–268 (SRTILQGNP) the chain is Extracellular. The helical transmembrane segment at 269–289 (LPFCFQILVAHSYAAVSPLLV) threads the bilayer. At 290–309 (LSNEKRITNLLISMYEKIVL) the chain is on the cytoplasmic side.

It belongs to the G-protein coupled receptor 1 family.

Its subcellular location is the cell membrane. Its function is as follows. Putative pheromone receptor implicated in the regulation of social and reproductive behavior. This chain is Vomeronasal type-1 receptor 52 (Vmn1r52), found in Mus musculus (Mouse).